A 120-amino-acid chain; its full sequence is NAD(P)H-quinone oxidoreductase subunit 3, chloroplastic (120 aa).

A run of 3 helical transmembrane segments spans residues isoleucine 9–glycine 29, methionine 64–methionine 84, and valine 88–leucine 108.

The protein belongs to the complex I subunit 3 family. NDH is composed of at least 16 different subunits, 5 of which are encoded in the nucleus.

The protein localises to the plastid. It localises to the chloroplast thylakoid membrane. It carries out the reaction a plastoquinone + NADH + (n+1) H(+)(in) = a plastoquinol + NAD(+) + n H(+)(out). The catalysed reaction is a plastoquinone + NADPH + (n+1) H(+)(in) = a plastoquinol + NADP(+) + n H(+)(out). Its function is as follows. NDH shuttles electrons from NAD(P)H:plastoquinone, via FMN and iron-sulfur (Fe-S) centers, to quinones in the photosynthetic chain and possibly in a chloroplast respiratory chain. The immediate electron acceptor for the enzyme in this species is believed to be plastoquinone. Couples the redox reaction to proton translocation, and thus conserves the redox energy in a proton gradient. This chain is NAD(P)H-quinone oxidoreductase subunit 3, chloroplastic, found in Arabis hirsuta (Hairy rock-cress).